Consider the following 412-residue polypeptide: Multifunctional CCA protein (412 aa).

The ATP site is built by Gly-8 and Arg-11. Gly-8 and Arg-11 together coordinate CTP. Mg(2+) is bound by residues Asp-21 and Asp-23. ATP-binding residues include Arg-91, Arg-137, and Arg-140. CTP-binding residues include Arg-91, Arg-137, and Arg-140. Residues 226-327 enclose the HD domain; sequence TGEHVLMVVE…VKVLERCDAL (102 aa).

This sequence belongs to the tRNA nucleotidyltransferase/poly(A) polymerase family. Bacterial CCA-adding enzyme type 1 subfamily. As to quaternary structure, monomer. Can also form homodimers and oligomers. Requires Mg(2+) as cofactor. The cofactor is Ni(2+).

The enzyme catalyses a tRNA precursor + 2 CTP + ATP = a tRNA with a 3' CCA end + 3 diphosphate. It catalyses the reaction a tRNA with a 3' CCA end + 2 CTP + ATP = a tRNA with a 3' CCACCA end + 3 diphosphate. Its function is as follows. Catalyzes the addition and repair of the essential 3'-terminal CCA sequence in tRNAs without using a nucleic acid template. Adds these three nucleotides in the order of C, C, and A to the tRNA nucleotide-73, using CTP and ATP as substrates and producing inorganic pyrophosphate. tRNA 3'-terminal CCA addition is required both for tRNA processing and repair. Also involved in tRNA surveillance by mediating tandem CCA addition to generate a CCACCA at the 3' terminus of unstable tRNAs. While stable tRNAs receive only 3'-terminal CCA, unstable tRNAs are marked with CCACCA and rapidly degraded. The polypeptide is Multifunctional CCA protein (Azoarcus sp. (strain BH72)).